A 229-amino-acid chain; its full sequence is Mediator of RNA polymerase II transcription subunit 7 (229 aa).

Belongs to the Mediator complex subunit 7 family. As to quaternary structure, component of the Mediator complex.

The protein localises to the nucleus. Functionally, component of the Mediator complex, a coactivator involved in the regulated transcription of nearly all RNA polymerase II-dependent genes. Mediator functions as a bridge to convey information from gene-specific regulatory proteins to the basal RNA polymerase II transcription machinery. Mediator is recruited to promoters by direct interactions with regulatory proteins and serves as a scaffold for the assembly of a functional preinitiation complex with RNA polymerase II and the general transcription factors. The chain is Mediator of RNA polymerase II transcription subunit 7 (med7) from Xenopus tropicalis (Western clawed frog).